The primary structure comprises 479 residues: Ribulose bisphosphate carboxylase large chain (479 aa).

The propeptide occupies 1–2 (MS). 2 residues coordinate substrate: N123 and T173. The active-site Proton acceptor is the K175. K177 serves as a coordination point for substrate. Mg(2+) contacts are provided by K201, D203, and E204. The residue at position 201 (K201) is an N6-carboxylysine. S208 bears the Phosphoserine mark. The active-site Proton acceptor is the H294. Substrate is bound by residues R295 and H327. Residue T330 is modified to Phosphothreonine. S379 contacts substrate.

This sequence belongs to the RuBisCO large chain family. Type I subfamily. In terms of assembly, heterohexadecamer of 8 large chains and 8 small chains; disulfide-linked. The disulfide link is formed within the large subunit homodimers. The cofactor is Mg(2+). Post-translationally, the disulfide bond which can form in the large chain dimeric partners within the hexadecamer appears to be associated with oxidative stress and protein turnover.

Its subcellular location is the plastid. The protein localises to the chloroplast. The enzyme catalyses 2 (2R)-3-phosphoglycerate + 2 H(+) = D-ribulose 1,5-bisphosphate + CO2 + H2O. It carries out the reaction D-ribulose 1,5-bisphosphate + O2 = 2-phosphoglycolate + (2R)-3-phosphoglycerate + 2 H(+). RuBisCO catalyzes two reactions: the carboxylation of D-ribulose 1,5-bisphosphate, the primary event in carbon dioxide fixation, as well as the oxidative fragmentation of the pentose substrate in the photorespiration process. Both reactions occur simultaneously and in competition at the same active site. In Lobularia maritima (Sweet alyssum), this protein is Ribulose bisphosphate carboxylase large chain.